The chain runs to 390 residues: MAAQTDFWDAIVIGAGIQGCFTAYHLAKHSKSVLLLEQFFLPHSRGSSHGQSRIIRKAYPEDFYTMMMKECYQTWAQLEREAGTQLHRQTELLLLGTKENPGLKTIQATLSRQGIDHEYLSSVDLKQRFPNIRFTRGEVGLLDKTGGVLYADKALRALQHIICQLGGTVCDGEKVVEIRPGLPVTVKTTLKSYQANSLVITAGPWTNRLLHPLGIELPLQTLRINVCYWREKVPGSYGVSQAFPCILGLDLAPHHIYGLPASEYPGLMKICYHHGDNVDPEERDCPKTFSDIQDVQILCHFVRDHLPGLRAEPDIMERCMYTNTPDEHFILDCHPKYDNIVIGAGFSGHGFKLAPVVGKILYELSMKLPPSYDLAPFRMSRFSTLSKAHL.

An FAD-binding site is contributed by 9–39; it reads DAIVIGAGIQGCFTAYHLAKHSKSVLLLEQF. N6-acetyllysine occurs at positions 126 and 287. An S-8alpha-FAD cysteine modification is found at C319. The Microbody targeting signal motif lies at 388 to 390; it reads AHL.

It belongs to the MSOX/MTOX family. Requires FAD as cofactor. Kidney and liver.

It is found in the peroxisome. It catalyses the reaction sarcosine + O2 + H2O = formaldehyde + glycine + H2O2. The catalysed reaction is L-pipecolate + O2 = L-1-piperideine-6-carboxylate + H2O2 + H(+). Its function is as follows. Metabolizes sarcosine, L-pipecolic acid and L-proline. The sequence is that of Peroxisomal sarcosine oxidase (Pipox) from Mus musculus (Mouse).